The following is a 358-amino-acid chain: WD repeat-containing protein 53 (358 aa).

WD repeat units follow at residues 8–47 (GHSSSILCLNANKDGLVASGGEGGDLVAWGEDGTPLGHMQ), 92–131 (VNEEEINCLSLNETESLLASADDSGAIKILDLEKKKVTRS), 134–174 (RHSN…PVWI), 195–234 (LNPALAHSVSVASCGNIFSCGAEDGKVRIFRVMGVKCERE), and 239–278 (GHTLGVSQVCFLPESSLLLTGGNDGRIRLWDVSGKMEKLQ). The segment at 288 to 309 (KKAKRAACPTQGGNSRAPGAED) is disordered.

Belongs to the WD repeat WDR53 family.

This chain is WD repeat-containing protein 53 (Wdr53), found in Mus musculus (Mouse).